The sequence spans 167 residues: uncharacterized protein (167 aa).

The interval 95–114 (AHSLHHQSHQSDVQVHAKGN) is disordered.

This is an uncharacterized protein from Haemophilus influenzae (Bacteriophage HP1).